Consider the following 251-residue polypeptide: HTH-type transcriptional regulator UlaR (251 aa).

Residues 3-58 (EAQRHQILLEMLAQLGFVTVEKVVERLGISPATARRDINKLDESGKLKKVRNGAEA) form the HTH deoR-type domain. The segment at residues 20–39 (VTVEKVVERLGISPATARRD) is a DNA-binding region (H-T-H motif).

Its subcellular location is the cytoplasm. Functionally, represses ulaG and the ulaABCDEF operon. The polypeptide is HTH-type transcriptional regulator UlaR (Escherichia coli O139:H28 (strain E24377A / ETEC)).